The chain runs to 184 residues: MTLFPLPSTSDPAEADESTKRGEQARALCLRLLTARARTRAELEAALAKRGYPDDIAAAVLDRLTQVGLVDDEDFAEQWVRSRRLNAGKGKRALAAELRKKGVDNEVIDGALAGIDAGAERTRAEQLVRDKLRREKLGDPDDRDAENKVARRLVGMLARRGYNQTMAFDVVTAELANERERRKV.

Residues 1–21 (MTLFPLPSTSDPAEADESTKR) form a disordered region.

It belongs to the RecX family.

The protein resides in the cytoplasm. Modulates RecA activity. In Mycolicibacterium vanbaalenii (strain DSM 7251 / JCM 13017 / BCRC 16820 / KCTC 9966 / NRRL B-24157 / PYR-1) (Mycobacterium vanbaalenii), this protein is Regulatory protein RecX.